A 217-amino-acid polypeptide reads, in one-letter code: UPF0319 protein VS_II0881 (217 aa).

Positions 1–21 (MKTIQSIALLSAIVAAPSVLA) are cleaved as a signal peptide.

The protein belongs to the UPF0319 family.

The polypeptide is UPF0319 protein VS_II0881 (Vibrio atlanticus (strain LGP32) (Vibrio splendidus (strain Mel32))).